The following is a 517-amino-acid chain: Glycerol kinase (517 aa).

T24 provides a ligand contact to ADP. ATP is bound by residues T24, T25, and S26. Sn-glycerol 3-phosphate is bound at residue T24. R28 is a binding site for ADP. Positions 94, 95, 146, and 261 each coordinate sn-glycerol 3-phosphate. Glycerol-binding residues include R94, E95, Y146, D261, and Q262. T283 and G327 together coordinate ADP. The ATP site is built by T283, G327, Q331, and G428. G428 and N432 together coordinate ADP.

Belongs to the FGGY kinase family.

It catalyses the reaction glycerol + ATP = sn-glycerol 3-phosphate + ADP + H(+). Its pathway is polyol metabolism; glycerol degradation via glycerol kinase pathway; sn-glycerol 3-phosphate from glycerol: step 1/1. With respect to regulation, inhibited by fructose 1,6-bisphosphate (FBP). Functionally, key enzyme in the regulation of glycerol uptake and metabolism. Catalyzes the phosphorylation of glycerol to yield sn-glycerol 3-phosphate. The protein is Glycerol kinase of Mycobacterium tuberculosis (strain ATCC 25177 / H37Ra).